The chain runs to 158 residues: MQGRLSAWLVKHGLVHRSLGFDYQGIETLQIKSEDWHSIAVISYVYGYNYLRSQCAYDVAPGGLLASVYHLTRIQYGVDQPEEVCIKVFAARRNPRIPSVFWIWKSADFQERESYDMLGISYDNHPRLKRILMPESWIGWPLRKDYIAPNFYEIQDAH.

Belongs to the complex I 30 kDa subunit family. In terms of assembly, NDH is composed of at least 16 different subunits, 5 of which are encoded in the nucleus.

Its subcellular location is the plastid. It localises to the chloroplast thylakoid membrane. The catalysed reaction is a plastoquinone + NADH + (n+1) H(+)(in) = a plastoquinol + NAD(+) + n H(+)(out). The enzyme catalyses a plastoquinone + NADPH + (n+1) H(+)(in) = a plastoquinol + NADP(+) + n H(+)(out). In terms of biological role, NDH shuttles electrons from NAD(P)H:plastoquinone, via FMN and iron-sulfur (Fe-S) centers, to quinones in the photosynthetic chain and possibly in a chloroplast respiratory chain. The immediate electron acceptor for the enzyme in this species is believed to be plastoquinone. Couples the redox reaction to proton translocation, and thus conserves the redox energy in a proton gradient. This chain is NAD(P)H-quinone oxidoreductase subunit J, chloroplastic, found in Platanus occidentalis (Sycamore).